The primary structure comprises 70 residues: Protein SlyX homolog (70 aa).

The protein belongs to the SlyX family.

The chain is Protein SlyX homolog from Nitrobacter winogradskyi (strain ATCC 25391 / DSM 10237 / CIP 104748 / NCIMB 11846 / Nb-255).